Consider the following 286-residue polypeptide: Probable endonuclease 4 (286 aa).

Residues H71, H111, E147, D181, H184, H218, D231, H233, and E263 each coordinate Zn(2+).

It belongs to the AP endonuclease 2 family. Requires Zn(2+) as cofactor.

It carries out the reaction Endonucleolytic cleavage to 5'-phosphooligonucleotide end-products.. Endonuclease IV plays a role in DNA repair. It cleaves phosphodiester bonds at apurinic or apyrimidinic (AP) sites, generating a 3'-hydroxyl group and a 5'-terminal sugar phosphate. In Vibrio cholerae serotype O1 (strain ATCC 39541 / Classical Ogawa 395 / O395), this protein is Probable endonuclease 4.